The primary structure comprises 373 residues: Coiled-coil domain-containing protein 34 (373 aa).

Disordered stretches follow at residues Met1–Gly112 and Cys118–Leu137. Ser52 carries the post-translational modification Phosphoserine. Polar residues predominate over residues Asn61–Gln76. Acidic residues predominate over residues Phe77–His101. Positions Lys152–Lys286 form a coiled coil. The disordered stretch occupies residues Ile324–Ser352. The segment covering Pro328–Gly337 has biased composition (basic and acidic residues).

As to expression, expressed in sperm.

It localises to the cell projection. The protein resides in the cilium. The protein localises to the flagellum. Functionally, involved in spermatogenesis. Has a probable role in anterograde intraflagellar transport which is essential for the formation of sperm flagella. The polypeptide is Coiled-coil domain-containing protein 34 (CCDC34) (Homo sapiens (Human)).